Reading from the N-terminus, the 339-residue chain is 4-hydroxy-2-oxovalerate aldolase (339 aa).

The Pyruvate carboxyltransferase domain maps to 8–260 (IILHDMCLRD…STDVDVFKLM (253 aa)). 16 to 17 (RD) serves as a coordination point for substrate. A Mn(2+)-binding site is contributed by Asp-17. The Proton acceptor role is filled by His-20. The substrate site is built by Ser-170 and His-199. The Mn(2+) site is built by His-199 and His-201. Tyr-290 is a binding site for substrate.

It belongs to the 4-hydroxy-2-oxovalerate aldolase family.

The catalysed reaction is (S)-4-hydroxy-2-oxopentanoate = acetaldehyde + pyruvate. This is 4-hydroxy-2-oxovalerate aldolase from Shewanella woodyi (strain ATCC 51908 / MS32).